Reading from the N-terminus, the 383-residue chain is Aurachin C monooxygenase/isomerase (383 aa).

FAD is bound by residues G15, S47, V128, D285, and G295–C299.

It depends on FAD as a cofactor.

It catalyses the reaction aurachin C + NADH + O2 + H(+) = 4-hydroxy-2-methyl-3-oxo-4-[(2E,6E)-farnesyl]-3,4-dihydroquinoline 1-oxide + NAD(+) + H2O. The enzyme catalyses aurachin C + NADPH + O2 + H(+) = 4-hydroxy-2-methyl-3-oxo-4-[(2E,6E)-farnesyl]-3,4-dihydroquinoline 1-oxide + NADP(+) + H2O. It carries out the reaction aurachin C + NADH + O2 + H(+) = aurachin C epoxide + NAD(+) + H2O. The catalysed reaction is aurachin C + NADPH + O2 + H(+) = aurachin C epoxide + NADP(+) + H2O. It catalyses the reaction aurachin C epoxide = 2-hydroxy-1a-methyl-7a-[(2E,6E)-farnesyl]-1a,2-dihydrooxireno[2,3-b]quinolin-7(7aH)-one. The enzyme catalyses 2-hydroxy-1a-methyl-7a-[(2E,6E)-farnesyl]-1a,2-dihydrooxireno[2,3-b]quinolin-7(7aH)-one = 4-hydroxy-2-methyl-3-oxo-4-[(2E,6E)-farnesyl]-3,4-dihydroquinoline 1-oxide. Functionally, catalyzes the initial step in the conversion of aurachin C to aurachin B. Catalyzes the epoxidation of the C(2)-C(3) double bond of aurachin C, which is followed by a semipinacol rearrangement, causing migration of the farnesyl group from C(3) to C(4). Accepts both NADH and NADPH, but has a preference for NADH. This chain is Aurachin C monooxygenase/isomerase, found in Stigmatella aurantiaca.